A 91-amino-acid chain; its full sequence is Small ribosomal subunit protein uS19 (91 aa).

The protein belongs to the universal ribosomal protein uS19 family.

In terms of biological role, protein S19 forms a complex with S13 that binds strongly to the 16S ribosomal RNA. The polypeptide is Small ribosomal subunit protein uS19 (Halorhodospira halophila (strain DSM 244 / SL1) (Ectothiorhodospira halophila (strain DSM 244 / SL1))).